The chain runs to 153 residues: Small ribosomal subunit protein uS13 (153 aa).

The segment at 134-153 (GQRTKSNGRRGRSMGVSRKK) is disordered.

It belongs to the universal ribosomal protein uS13 family.

Its subcellular location is the cytoplasm. Functionally, located at the top of the head of the 40S subunit, it contacts several helices of the 18S rRNA. This chain is Small ribosomal subunit protein uS13 (RPS18), found in Encephalitozoon cuniculi (strain GB-M1) (Microsporidian parasite).